A 600-amino-acid chain; its full sequence is UvrABC system protein C (600 aa).

The GIY-YIG domain occupies 15-92 (DKPGCYLMKD…IKKYQPYYNV (78 aa)). The region spanning 197-232 (AQVKQDLTEKMTQASMDLEFERAAEIRDQLKYIEQT) is the UVR domain.

Belongs to the UvrC family. In terms of assembly, interacts with UvrB in an incision complex.

It localises to the cytoplasm. In terms of biological role, the UvrABC repair system catalyzes the recognition and processing of DNA lesions. UvrC both incises the 5' and 3' sides of the lesion. The N-terminal half is responsible for the 3' incision and the C-terminal half is responsible for the 5' incision. This chain is UvrABC system protein C, found in Lactobacillus johnsonii (strain CNCM I-12250 / La1 / NCC 533).